The chain runs to 66 residues: U1-theraphotoxin-Cg1d 2 (66 aa).

The signal sequence occupies residues 1-21; sequence MKMSALFPIFGLPLLFCNSFA. A propeptide spanning residues 22 to 29 is cleaved from the precursor; it reads AELKATGR. Disulfide bonds link Cys31-Cys46, Cys38-Cys51, and Cys45-Cys58. Pro63 bears the Proline amide mark.

It belongs to the neurotoxin 10 (Hwtx-1) family. 46 (Jztx-7/10/12) subfamily. Expressed by the venom gland.

Its subcellular location is the secreted. Its function is as follows. Probable ion channel inhibitor. The protein is U1-theraphotoxin-Cg1d 2 of Chilobrachys guangxiensis (Chinese earth tiger tarantula).